The following is a 262-amino-acid chain: Hydroxyethylthiazole kinase (262 aa).

Met-39 is a substrate binding site. ATP is bound by residues Lys-115 and Thr-160. A substrate-binding site is contributed by Gly-187.

The protein belongs to the Thz kinase family. Requires Mg(2+) as cofactor.

The catalysed reaction is 5-(2-hydroxyethyl)-4-methylthiazole + ATP = 4-methyl-5-(2-phosphooxyethyl)-thiazole + ADP + H(+). The protein operates within cofactor biosynthesis; thiamine diphosphate biosynthesis; 4-methyl-5-(2-phosphoethyl)-thiazole from 5-(2-hydroxyethyl)-4-methylthiazole: step 1/1. Functionally, catalyzes the phosphorylation of the hydroxyl group of 4-methyl-5-beta-hydroxyethylthiazole (THZ). This Staphylococcus epidermidis (strain ATCC 35984 / DSM 28319 / BCRC 17069 / CCUG 31568 / BM 3577 / RP62A) protein is Hydroxyethylthiazole kinase.